Reading from the N-terminus, the 174-residue chain is NADH-quinone oxidoreductase subunit C (174 aa).

This sequence belongs to the complex I 30 kDa subunit family. As to quaternary structure, NDH-1 is composed of 14 different subunits. Subunits NuoB, C, D, E, F, and G constitute the peripheral sector of the complex.

The protein localises to the cell membrane. It catalyses the reaction a quinone + NADH + 5 H(+)(in) = a quinol + NAD(+) + 4 H(+)(out). Functionally, NDH-1 shuttles electrons from NADH, via FMN and iron-sulfur (Fe-S) centers, to quinones in the respiratory chain. The immediate electron acceptor for the enzyme in this species is believed to be ubiquinone. Couples the redox reaction to proton translocation (for every two electrons transferred, four hydrogen ions are translocated across the cytoplasmic membrane), and thus conserves the redox energy in a proton gradient. In Roseiflexus castenholzii (strain DSM 13941 / HLO8), this protein is NADH-quinone oxidoreductase subunit C.